A 373-amino-acid chain; its full sequence is MKGLFAFGLGLLSLVNALPQAQGGGAAASAKVSGTRFVIDGKTGYFAGTNSYWIGFLTNNRDVDTTLDHIASSGLKILRVWGFNDVNNQPSGNTVWFQRLASSGSQINTGPNGLQRLDYLVRSAETRGIKLIIALVNYWDDFGGMKAYVNAFGGTKESWYTNARAQEQYKRYIQAVVSRYVNSPAIFAWELANEPRCKGCNTNVIFNWATQISDYIRSLDKDHLITLGDEGFGLPGQTTYPYQYGEGTDFVKNLQIKNLDFGTFHMYPGHWGVPTSFGPGWIKDHAAACRAAGKPCLLEEYGYESDRCNVQKGWQQASRELSRDGMSGDLFWQWGDQLSTGQTHNDGFTIYYGSSLATCLVTDHVRAINALPA.

An N-terminal signal peptide occupies residues 1-17; the sequence is MKGLFAFGLGLLSLVNA. Residues Trp81, Asn193, and 194-196 each bind substrate; that span reads EPR. Catalysis depends on Glu194, which acts as the Proton donor/acceptor. Cys197 and Cys200 are oxidised to a cystine. 3 residues coordinate substrate: Glu230, Tyr267, and Trp271. Cysteines 289 and 296 form a disulfide. The active-site Nucleophile is the Glu300. Cysteines 308 and 359 form a disulfide. Trp332 contacts substrate.

Belongs to the glycosyl hydrolase 5 (cellulase A) family. As to quaternary structure, monomer. In terms of processing, not glycosylated.

The protein resides in the secreted. The catalysed reaction is Random hydrolysis of (1-&gt;4)-beta-D-mannosidic linkages in mannans, galactomannans and glucomannans.. Functionally, endo-1,4-mannanase that catalyzes the random hydrolysis of (1-&gt;4)-beta-D-mannosidic linkages in mannans and heteromannans. It is a crucial enzyme for depolymerization of seed galactomannans and wood galactoglucomannans. Hydrolyzes structurally different mannan polysaccharides, such as galactomannans, glucomannans, and beta-1,4-mannans from different sources, yielding principally mannobiose. Also has transglycosylation activity. This is Mannan endo-1,4-beta-mannosidase A from Podospora anserina (strain S / ATCC MYA-4624 / DSM 980 / FGSC 10383) (Pleurage anserina).